Consider the following 192-residue polypeptide: Xanthine phosphoribosyltransferase (192 aa).

Xanthine is bound by residues Leu-20 and Asn-27. Position 128 to 132 (128 to 132 (AHGEA)) interacts with 5-phospho-alpha-D-ribose 1-diphosphate. Lys-156 lines the xanthine pocket.

The protein belongs to the purine/pyrimidine phosphoribosyltransferase family. Xpt subfamily. In terms of assembly, homodimer.

The protein resides in the cytoplasm. It catalyses the reaction XMP + diphosphate = xanthine + 5-phospho-alpha-D-ribose 1-diphosphate. It functions in the pathway purine metabolism; XMP biosynthesis via salvage pathway; XMP from xanthine: step 1/1. Converts the preformed base xanthine, a product of nucleic acid breakdown, to xanthosine 5'-monophosphate (XMP), so it can be reused for RNA or DNA synthesis. In Lactobacillus johnsonii (strain CNCM I-12250 / La1 / NCC 533), this protein is Xanthine phosphoribosyltransferase.